We begin with the raw amino-acid sequence, 184 residues long: GTP cyclohydrolase 1 (184 aa).

The Zn(2+) site is built by cysteine 75, histidine 78, and cysteine 146.

Belongs to the GTP cyclohydrolase I family. In terms of assembly, toroid-shaped homodecamer, composed of two pentamers of five dimers.

The enzyme catalyses GTP + H2O = 7,8-dihydroneopterin 3'-triphosphate + formate + H(+). It functions in the pathway cofactor biosynthesis; 7,8-dihydroneopterin triphosphate biosynthesis; 7,8-dihydroneopterin triphosphate from GTP: step 1/1. The sequence is that of GTP cyclohydrolase 1 from Pseudoalteromonas atlantica (strain T6c / ATCC BAA-1087).